We begin with the raw amino-acid sequence, 69 residues long: Putative membrane protein insertion efficiency factor (69 aa).

Belongs to the UPF0161 family.

It localises to the cell inner membrane. Could be involved in insertion of integral membrane proteins into the membrane. The protein is Putative membrane protein insertion efficiency factor of Laribacter hongkongensis (strain HLHK9).